Here is a 1273-residue protein sequence, read N- to C-terminus: DNA-directed RNA polymerase subunit beta (1273 aa).

This sequence belongs to the RNA polymerase beta chain family. The RNAP catalytic core consists of 2 alpha, 1 beta, 1 beta' and 1 omega subunit. When a sigma factor is associated with the core the holoenzyme is formed, which can initiate transcription.

The enzyme catalyses RNA(n) + a ribonucleoside 5'-triphosphate = RNA(n+1) + diphosphate. In terms of biological role, DNA-dependent RNA polymerase catalyzes the transcription of DNA into RNA using the four ribonucleoside triphosphates as substrates. The chain is DNA-directed RNA polymerase subunit beta from Aster yellows witches'-broom phytoplasma (strain AYWB).